Consider the following 411-residue polypeptide: Tyrosine--tRNA ligase (411 aa).

Y34 serves as a coordination point for L-tyrosine. The 'HIGH' region signature appears at 39 to 48; the sequence is CTATSLHIGS. 2 residues coordinate L-tyrosine: Y171 and Q175. Residues 231-235 carry the 'KMSKS' region motif; sequence KMGKT. K234 is an ATP binding site. One can recognise an S4 RNA-binding domain in the interval 345–411; that stretch reads ITAFELFHEA…GKKRHILVKI (67 aa).

This sequence belongs to the class-I aminoacyl-tRNA synthetase family. TyrS type 1 subfamily. Homodimer.

Its subcellular location is the cytoplasm. The enzyme catalyses tRNA(Tyr) + L-tyrosine + ATP = L-tyrosyl-tRNA(Tyr) + AMP + diphosphate + H(+). Functionally, catalyzes the attachment of tyrosine to tRNA(Tyr) in a two-step reaction: tyrosine is first activated by ATP to form Tyr-AMP and then transferred to the acceptor end of tRNA(Tyr). The sequence is that of Tyrosine--tRNA ligase from Rickettsia bellii (strain RML369-C).